The following is a 313-amino-acid chain: Porphobilinogen deaminase 2 (313 aa).

At Cys-246 the chain carries S-(dipyrrolylmethanemethyl)cysteine.

The protein belongs to the HMBS family. In terms of assembly, monomer. The cofactor is dipyrromethane.

It carries out the reaction 4 porphobilinogen + H2O = hydroxymethylbilane + 4 NH4(+). The protein operates within porphyrin-containing compound metabolism; protoporphyrin-IX biosynthesis; coproporphyrinogen-III from 5-aminolevulinate: step 2/4. Tetrapolymerization of the monopyrrole PBG into the hydroxymethylbilane pre-uroporphyrinogen in several discrete steps. The polypeptide is Porphobilinogen deaminase 2 (hemC2) (Streptomyces coelicolor (strain ATCC BAA-471 / A3(2) / M145)).